Reading from the N-terminus, the 396-residue chain is Elongation factor Tu (396 aa).

The 197-residue stretch at 10–206 (KPHCNIGTIG…AVDAYIPQPE (197 aa)) folds into the tr-type G domain. Residues 19 to 26 (GHVDHGKT) are G1. Position 19–26 (19–26 (GHVDHGKT)) interacts with GTP. Threonine 26 provides a ligand contact to Mg(2+). Residues 60–64 (GITIS) are G2. Residues 81-84 (DCPG) are G3. Residues 81–85 (DCPGH) and 136–139 (NKCD) contribute to the GTP site. The interval 136–139 (NKCD) is G4. The tract at residues 174–176 (SAL) is G5.

This sequence belongs to the TRAFAC class translation factor GTPase superfamily. Classic translation factor GTPase family. EF-Tu/EF-1A subfamily. Monomer.

It is found in the cytoplasm. The catalysed reaction is GTP + H2O = GDP + phosphate + H(+). In terms of biological role, GTP hydrolase that promotes the GTP-dependent binding of aminoacyl-tRNA to the A-site of ribosomes during protein biosynthesis. In Nitrobacter hamburgensis (strain DSM 10229 / NCIMB 13809 / X14), this protein is Elongation factor Tu.